A 246-amino-acid chain; its full sequence is DNA-directed RNA polymerase subunit alpha (246 aa).

Belongs to the RNA polymerase alpha chain family. In terms of assembly, in plastids the minimal PEP RNA polymerase catalytic core is composed of four subunits: alpha, beta, beta', and beta''. When a (nuclear-encoded) sigma factor is associated with the core the holoenzyme is formed, which can initiate transcription (Potential).

The protein localises to the plastid. The catalysed reaction is RNA(n) + a ribonucleoside 5'-triphosphate = RNA(n+1) + diphosphate. Functionally, DNA-dependent RNA polymerase catalyzes the transcription of DNA into RNA using the four ribonucleoside triphosphates as substrates. The protein is DNA-directed RNA polymerase subunit alpha (rpoA) of Helicosporidium sp. subsp. Simulium jonesii (Green alga).